The chain runs to 248 residues: 14-3-3-like protein 2 (248 aa).

It belongs to the 14-3-3 family. Interacts with daf-16. Interacts with sir-2.1. Interacts with hcf-1.

It localises to the cytoplasm. Its subcellular location is the nucleus. Its function is as follows. Required for extension of lifespan by sir-2.1. Required to modulate lifespan, in concert with hcf-1, acting redundantly with 14-3-3-like protein par-5. Promotes nuclear export of yap-1. Negatively regulates the transcriptional activity of daf-16 by sequestering it to the cytoplasm. The protein is 14-3-3-like protein 2 of Caenorhabditis elegans.